Here is a 735-residue protein sequence, read N- to C-terminus: Peroxisomal multifunctional enzyme type 2 (735 aa).

The (3R)-hydroxyacyl-CoA dehydrogenase stretch occupies residues 1–305; sequence MASPLRFDGR…IEVLHKIDSE (305 aa). NAD(+) is bound by residues 16 to 40, L21, and D40; that span reads GAGG…VVND. Position 46 is an N6-acetyllysine; alternate (K46). N6-succinyllysine; alternate is present on K46. The residue at position 52 (S52) is a Phosphoserine. Residues K57 and K68 each carry the N6-succinyllysine modification. Position 75–76 (75–76) interacts with NAD(+); it reads SV. Position 84 is an N6-succinyllysine (K84). Residue N99 participates in NAD(+) binding. A substrate-binding site is contributed by S151. The active-site Proton acceptor is the Y164. Residues 164–168 and 196–199 each bind NAD(+); these read YSAAK and AGSR. A Phosphothreonine modification is found at T265. N6-succinyllysine is present on K275. Phosphoserine occurs at positions 304 and 308. An enoyl-CoA hydratase 2 region spans residues 321 to 621; that stretch reads SGFAGVVGHK…AQTPSEGGAL (301 aa). Residue K355 is modified to N6-succinyllysine. 405–406 contacts (3R)-3-hydroxydecanoyl-CoA; it reads HG. K423 carries the post-translational modification N6-succinyllysine. Residues K434, 509 to 514, G532, and F562 contribute to the (3R)-3-hydroxydecanoyl-CoA site; that span reads DSNPLH. The MaoC-like domain maps to 483 to 599; that stretch reads VPSRPPDAVL…QETGDIVISN (117 aa). The residue at position 564 (K564) is an N6-acetyllysine. N6-succinyllysine is present on residues K578 and K662. Positions 623–735 constitute an SCP2 domain; the sequence is SALVFGEIGR…QMILKDYAKL (113 aa). N6-acetyllysine is present on K668. Q705 and Q723 together coordinate substrate. An N6-succinyllysine modification is found at K724. Residues 733–735 carry the Microbody targeting signal motif; sequence AKL.

It belongs to the short-chain dehydrogenases/reductases (SDR) family. As to quaternary structure, homodimer.

The protein localises to the peroxisome. The catalysed reaction is a (3R)-3-hydroxyacyl-CoA + NAD(+) = a 3-oxoacyl-CoA + NADH + H(+). It carries out the reaction (24R,25R)-3alpha,7alpha,12alpha,24-tetrahydroxy-5beta-cholestan-26-oyl-CoA = (24E)-3alpha,7alpha,12alpha-trihydroxy-5beta-cholest-24-en-26-oyl-CoA + H2O. The enzyme catalyses a (3R)-3-hydroxyacyl-CoA = a (2E)-enoyl-CoA + H2O. It catalyses the reaction (2E)-octenoyl-CoA + H2O = (3R)-hydroxyoctanoyl-CoA. The catalysed reaction is (3R)-hydroxyoctanoyl-CoA + NAD(+) = 3-oxooctanoyl-CoA + NADH + H(+). It carries out the reaction (3R)-hydroxyhexadecanoyl-CoA + NAD(+) = 3-oxohexadecanoyl-CoA + NADH + H(+). The enzyme catalyses (2E)-hexadecenedioyl-CoA + H2O = (3R)-hydroxyhexadecanedioyl-CoA. It catalyses the reaction (3R)-hydroxyhexadecanedioyl-CoA + NAD(+) = 3-oxohexadecanedioyl-CoA + NADH + H(+). The catalysed reaction is (3R)-hydroxyhexadecanoyl-CoA = (2E)-hexadecenoyl-CoA + H2O. It carries out the reaction (3R)-3-hydroxydecanoyl-CoA = (2E)-decenoyl-CoA + H2O. The enzyme catalyses (3R)-3-hydroxydecanoyl-CoA + NAD(+) = 3-oxodecanoyl-CoA + NADH + H(+). It catalyses the reaction (24R,25R)-3alpha,7alpha,12alpha,24-tetrahydroxy-5beta-cholestan-26-oyl-CoA + NAD(+) = 3alpha,7alpha,12alpha-trihydroxy-24-oxo-5beta-cholestan-26-oyl-CoA + NADH + H(+). Its pathway is lipid metabolism; fatty acid beta-oxidation. Bifunctional enzyme acting on the peroxisomal fatty acid beta-oxidation pathway. Catalyzes two of the four reactions in fatty acid degradation: hydration of 2-enoyl-CoA (trans-2-enoyl-CoA) to produce (3R)-3-hydroxyacyl-CoA, and dehydrogenation of (3R)-3-hydroxyacyl-CoA to produce 3-ketoacyl-CoA (3-oxoacyl-CoA), which is further metabolized by SCPx. Can use straight-chain and branched-chain fatty acids, as well as bile acid intermediates as substrates. This is Peroxisomal multifunctional enzyme type 2 from Rattus norvegicus (Rat).